Consider the following 195-residue polypeptide: Pyridoxal 5'-phosphate synthase subunit PdxT (195 aa).

Residue Gly-49–Ser-51 participates in L-glutamine binding. The Nucleophile role is filled by Cys-81. L-glutamine contacts are provided by residues Arg-113 and Ile-141–Arg-142. Catalysis depends on charge relay system residues His-177 and Glu-179.

This sequence belongs to the glutaminase PdxT/SNO family. In terms of assembly, in the presence of PdxS, forms a dodecamer of heterodimers. Only shows activity in the heterodimer.

It carries out the reaction aldehydo-D-ribose 5-phosphate + D-glyceraldehyde 3-phosphate + L-glutamine = pyridoxal 5'-phosphate + L-glutamate + phosphate + 3 H2O + H(+). It catalyses the reaction L-glutamine + H2O = L-glutamate + NH4(+). It participates in cofactor biosynthesis; pyridoxal 5'-phosphate biosynthesis. Functionally, catalyzes the hydrolysis of glutamine to glutamate and ammonia as part of the biosynthesis of pyridoxal 5'-phosphate. The resulting ammonia molecule is channeled to the active site of PdxS. The protein is Pyridoxal 5'-phosphate synthase subunit PdxT of Mycolicibacterium vanbaalenii (strain DSM 7251 / JCM 13017 / BCRC 16820 / KCTC 9966 / NRRL B-24157 / PYR-1) (Mycobacterium vanbaalenii).